The chain runs to 619 residues: Trihelix transcription factor GTL2 (619 aa).

Disordered regions lie at residues 11–41 (HRFIASPPPPPPLPPHQPAAERSLPFPVSFS) and 62–100 (HHHHHHHHHDIKDGGATTGEWIGQTDHDDSDNHHQHHHH). The segment covering 16–27 (SPPPPPPLPPHQ) has biased composition (pro residues). Residues 102 to 154 (PWCSDEVLALLRFRSTVENWFPEFTWEHTSRKLAEVGFKRSPQECKEKFEEEE) enclose the Myb-like 1 domain. The stretch at 307–361 (VRNMIAQQEEMHKKLLEDMVKKEEEKIAREEAWKKQEIERVNKEVEIRAQEQAMA) forms a coiled coil. Disordered regions lie at residues 382–414 (VVQNPTSPSQDSSSLALRKTQGRRKFQTSSSLL) and 434–458 (STKTLKPKNQNPKPPKSDDKSDLGK). Positions 384 to 396 (QNPTSPSQDSSSL) are enriched in polar residues. Over residues 435–444 (TKTLKPKNQN) the composition is skewed to low complexity. Residues 448–458 (PKSDDKSDLGK) show a composition bias toward basic and acidic residues. The region spanning 459-526 (RWPKDEVLAL…RCKEKWENIN (68 aa)) is the Myb-like 2 domain. The Nuclear localization signal motif lies at 503-510 (SKKMLEIG). A disordered region spans residues 557–619 (SQPPTGTTAT…VQFSGFDLEF (63 aa)). Low complexity predominate over residues 561 to 574 (TGTTATTATTATSA). Residues 575–585 (RDLDTRPEENR) are compositionally biased toward basic and acidic residues.

It localises to the nucleus. Probable transcription factor that binds specific DNA sequence. This Arabidopsis thaliana (Mouse-ear cress) protein is Trihelix transcription factor GTL2.